Reading from the N-terminus, the 172-residue chain is RNA silencing suppressor p19 (172 aa).

The segment covering 1–20 has biased composition (basic and acidic residues); the sequence is MERAIQGNDTREQANGERWD. A disordered region spans residues 1 to 27; it reads MERAIQGNDTREQANGERWDGGSGGIT.

Belongs to the tombusvirus protein p19 family. Homodimer.

Acts as a suppressor of RNA-mediated gene silencing, also known as post-transcriptional gene silencing (PTGS), a mechanism of plant viral defense that limits the accumulation of viral RNAs. Binds to short interfering RNAs (siRNAs) with high affinity. Acts as a molecular caliper to specifically select siRNAs based on the length of the duplex region of the RNA. This is RNA silencing suppressor p19 from Dianthus caryophyllus (Carnation).